Reading from the N-terminus, the 388-residue chain is MNLHEYQAKSLFAEYGLPVSEGFACDTAQEAVEAAGRIGGNLWVVKCQVHAGGRGKAGGVKVTGDKEEIRAFAEHWLGKNLVTYQTDEKGQPVAKILVESCTDIANELYLGAVVDRATRRVVFMASTEGGVEIEKVAEETPELIHKAIIDPLTGPQPYQARDLGFKLGLNPTQMKQFTKIFMGLATMFVDHDFALLEINPLVITTEGNLHCLDGKIGIDGNALFRQPKIKAMHDPSQDDAREAHAAMFELNYVALDGNVGCMVNGAGLAMGTMDIVNLHGGKPANFLDVGGGATKERVAEAFKIILSDSNVKAVLVNIFGGIVRCDMIAEGIIGAVKEVGVKVPVVVRLEGTNAELGREVLAKSGLDIIAANSLTDAAEQVVKAAEGK.

Positions 9–244 constitute an ATP-grasp domain; sequence KSLFAEYGLP…PSQDDAREAH (236 aa). ATP is bound by residues Lys46, 53–55, Glu99, Thr102, and Glu107; that span reads GRG. Mg(2+) is bound by residues Asn199 and Asp213. Substrate contacts are provided by residues Asn264 and 321–323; that span reads GIV.

Belongs to the succinate/malate CoA ligase beta subunit family. As to quaternary structure, heterotetramer of two alpha and two beta subunits. Requires Mg(2+) as cofactor.

The catalysed reaction is succinate + ATP + CoA = succinyl-CoA + ADP + phosphate. It carries out the reaction GTP + succinate + CoA = succinyl-CoA + GDP + phosphate. The protein operates within carbohydrate metabolism; tricarboxylic acid cycle; succinate from succinyl-CoA (ligase route): step 1/1. Its function is as follows. Succinyl-CoA synthetase functions in the citric acid cycle (TCA), coupling the hydrolysis of succinyl-CoA to the synthesis of either ATP or GTP and thus represents the only step of substrate-level phosphorylation in the TCA. The beta subunit provides nucleotide specificity of the enzyme and binds the substrate succinate, while the binding sites for coenzyme A and phosphate are found in the alpha subunit. In Shewanella sp. (strain MR-4), this protein is Succinate--CoA ligase [ADP-forming] subunit beta.